We begin with the raw amino-acid sequence, 95 residues long: Co-chaperonin GroES (95 aa).

It belongs to the GroES chaperonin family. As to quaternary structure, heptamer of 7 subunits arranged in a ring. Interacts with the chaperonin GroEL.

Its subcellular location is the cytoplasm. Together with the chaperonin GroEL, plays an essential role in assisting protein folding. The GroEL-GroES system forms a nano-cage that allows encapsulation of the non-native substrate proteins and provides a physical environment optimized to promote and accelerate protein folding. GroES binds to the apical surface of the GroEL ring, thereby capping the opening of the GroEL channel. This Chlorobium phaeobacteroides (strain BS1) protein is Co-chaperonin GroES.